A 260-amino-acid chain; its full sequence is 3-deoxy-manno-octulosonate cytidylyltransferase (260 aa).

It belongs to the KdsB family.

It localises to the cytoplasm. It catalyses the reaction 3-deoxy-alpha-D-manno-oct-2-ulosonate + CTP = CMP-3-deoxy-beta-D-manno-octulosonate + diphosphate. The protein operates within nucleotide-sugar biosynthesis; CMP-3-deoxy-D-manno-octulosonate biosynthesis; CMP-3-deoxy-D-manno-octulosonate from 3-deoxy-D-manno-octulosonate and CTP: step 1/1. It functions in the pathway bacterial outer membrane biogenesis; lipopolysaccharide biosynthesis. Its function is as follows. Activates KDO (a required 8-carbon sugar) for incorporation into bacterial lipopolysaccharide in Gram-negative bacteria. This Polaromonas naphthalenivorans (strain CJ2) protein is 3-deoxy-manno-octulosonate cytidylyltransferase.